A 63-amino-acid polypeptide reads, in one-letter code: U-reduvitoxin-Pr4a (63 aa).

The signal sequence occupies residues 1-19; it reads MKIFGLFLLIATYMALAFA. 3 disulfide bridges follow: C24/C40, C31/C45, and C39/C52.

The protein belongs to the venom Ptu1-like knottin family. As to expression, expressed by the venom gland.

The protein resides in the secreted. Its function is as follows. Binds reversibly and blocks P/Q-type voltage-gated calcium channels (Cav). This chain is U-reduvitoxin-Pr4a, found in Platymeris rhadamanthus (Red spot assassin bug).